The following is a 185-amino-acid chain: MLNQIKQDAQTRMTKSIDALRHSLTTVRTGRASPALLDNIKVKAYGTDTPLNQVASISVSEGRSLVISLFDKGMIKDVEKAIYASDLGLTPTVVGTVIRLNLPPLTEERRKELSKSVHGEGEDAKVAIRNIRRDANQQVKDLLKDKQVTEDEARGAEDDIQKLTDKAIKDVDEVVKGKEQELMTV.

This sequence belongs to the RRF family.

It is found in the cytoplasm. Its function is as follows. Responsible for the release of ribosomes from messenger RNA at the termination of protein biosynthesis. May increase the efficiency of translation by recycling ribosomes from one round of translation to another. The protein is Ribosome-recycling factor of Xanthomonas campestris pv. campestris (strain 8004).